The primary structure comprises 169 residues: Phosphopantetheine adenylyltransferase (169 aa).

Threonine 14 lines the substrate pocket. Residues 14-15 and histidine 22 each bind ATP; that span reads TF. Residues lysine 46, leucine 78, and arginine 92 each contribute to the substrate site. ATP-binding positions include 93 to 95, glutamate 103, and 128 to 134; these read GLR and HSFISSS.

The protein belongs to the bacterial CoaD family. Homohexamer. It depends on Mg(2+) as a cofactor.

It localises to the cytoplasm. It carries out the reaction (R)-4'-phosphopantetheine + ATP + H(+) = 3'-dephospho-CoA + diphosphate. Its pathway is cofactor biosynthesis; coenzyme A biosynthesis; CoA from (R)-pantothenate: step 4/5. Its function is as follows. Reversibly transfers an adenylyl group from ATP to 4'-phosphopantetheine, yielding dephospho-CoA (dPCoA) and pyrophosphate. In Stenotrophomonas maltophilia (strain K279a), this protein is Phosphopantetheine adenylyltransferase.